An 801-amino-acid chain; its full sequence is Na(+)/H(+) antiporter subunit A1 (801 aa).

The next 19 membrane-spanning stretches (helical) occupy residues 1–21 (MSLL…IPIL), 28–48 (IHLG…MLTL), 79–99 (LGLL…LYSI), 117–137 (LFMG…LYLF), 166–186 (LIIT…LAIP), 206–226 (PFFI…SAQF), 265–285 (IFAA…ITLF), 300–320 (ILAF…GIGA), 337–357 (FTAA…LFMI), 373–393 (LGGL…TALS), 427–447 (LGYL…VYSI), 472–492 (ILML…GLFP), 522–542 (GLTP…LLIV), 591–611 (LVII…SVPF), 623–643 (IFEV…LFAK), 646–666 (LFSI…FIFF), 671–691 (LALT…LCFY), 707–727 (LTNA…GLIA), and 764–784 (MDTL…YTMI).

This sequence belongs to the CPA3 antiporters (TC 2.A.63) subunit A family. As to quaternary structure, may form a heterooligomeric complex that consists of seven subunits: mnhA1, mnhB1, mnhC1, mnhD1, mnhE1, mnhF1 and mnhG1.

Its subcellular location is the cell membrane. In terms of biological role, mnh complex is a Na(+)/H(+) antiporter involved in Na(+) excretion. In Staphylococcus aureus (strain Mu3 / ATCC 700698), this protein is Na(+)/H(+) antiporter subunit A1 (mnhA1).